Here is a 186-residue protein sequence, read N- to C-terminus: Transcription factor pgmR (186 aa).

A DNA-binding region (zn(2)-C6 fungal-type) is located at residues C19–C46. The disordered stretch occupies residues R52–L98.

The protein localises to the nucleus. In terms of biological role, transcription factor that specifically regulates the expression of the pgm gene cluster that mediates the biosynthesis of cryptic naphthoquinones derived pigments responsible for the coloration of the fruiting bodies. This is Transcription factor pgmR from Aspergillus terreus (strain NIH 2624 / FGSC A1156).